Consider the following 511-residue polypeptide: Putative polyol transporter 2 (511 aa).

12 consecutive transmembrane segments (helical) span residues 25 to 45 (FAFA…YDIG), 63 to 83 (VQLE…SGAA), 94 to 114 (YTIV…GFAT), 117 to 137 (PFIM…MMIA), 156 to 176 (FPEI…YFFA), 186 to 206 (FMLG…LAMP), 284 to 304 (ILIA…DAVV), 324 to 344 (LATV…TCLV), 351 to 371 (ALLL…GTSL), 384 to 404 (WAIG…SLGA), 424 to 444 (GASL…MTFL), and 454 to 474 (GAFL…FTFL).

It belongs to the major facilitator superfamily. Sugar transporter (TC 2.A.1.1) family.

It is found in the membrane. Its function is as follows. Plasma membrane sugar-proton symporter. The sequence is that of Putative polyol transporter 2 (PLT2) from Arabidopsis thaliana (Mouse-ear cress).